A 154-amino-acid polypeptide reads, in one-letter code: Troponin C, isoform 1 (154 aa).

4 consecutive EF-hand domains span residues 8–43 (EQTA…LGHQ), 44–79 (LDDA…FLVE), 84–119 (AMMA…LDDK), and 120–154 (LTND…GGDD). Residues D57, D59, S61, Q63, and E68 each contribute to the Ca(2+) site. Residues D133, D135, S137, T139, and E144 each contribute to the Ca(2+) site.

It belongs to the troponin C family. In terms of tissue distribution, present only in adult muscles.

This is Troponin C, isoform 1 (TpnC41C) from Drosophila melanogaster (Fruit fly).